The sequence spans 150 residues: Transcriptional regulator MraZ (150 aa).

2 consecutive SpoVT-AbrB domains span residues 9–54 (QSIH…PPEE) and 83–126 (AEEC…NKST).

The protein belongs to the MraZ family. Forms oligomers.

It is found in the cytoplasm. The protein localises to the nucleoid. The polypeptide is Transcriptional regulator MraZ (Syntrophobacter fumaroxidans (strain DSM 10017 / MPOB)).